Consider the following 332-residue polypeptide: Adenine deaminase (332 aa).

3 residues coordinate Zn(2+): His16, His18, and His196. Glu199 serves as the catalytic Proton donor. Asp277 provides a ligand contact to Zn(2+). Substrate is bound at residue Asp278.

The protein belongs to the metallo-dependent hydrolases superfamily. Adenosine and AMP deaminases family. Adenine deaminase type 2 subfamily. The cofactor is Zn(2+).

The catalysed reaction is adenine + H2O + H(+) = hypoxanthine + NH4(+). In terms of biological role, catalyzes the hydrolytic deamination of adenine to hypoxanthine. Plays an important role in the purine salvage pathway and in nitrogen catabolism. The sequence is that of Adenine deaminase from Acinetobacter baylyi (strain ATCC 33305 / BD413 / ADP1).